The primary structure comprises 685 residues: Diphthine--ammonia ligase (685 aa).

The protein in the C-terminal section; belongs to the RutC family. This sequence in the N-terminal section; belongs to the Diphthine--ammonia ligase family. In terms of assembly, interacts with elongation factor 2 (eEF-2; EFT1 or EFT2).

Its subcellular location is the cytoplasm. The enzyme catalyses diphthine-[translation elongation factor 2] + NH4(+) + ATP = diphthamide-[translation elongation factor 2] + AMP + diphosphate + H(+). It functions in the pathway protein modification; peptidyl-diphthamide biosynthesis. Functionally, amidase that catalyzes the last step of diphthamide biosynthesis using ammonium and ATP. Diphthamide biosynthesis consists in the conversion of an L-histidine residue in the translation elongation factor eEF-2 (EFT1 or EFT2) to diphthamide. This Saccharomyces cerevisiae (strain ATCC 204508 / S288c) (Baker's yeast) protein is Diphthine--ammonia ligase (DPH6).